A 79-amino-acid chain; its full sequence is U24-theraphotoxin-Cg1a (79 aa).

The signal sequence occupies residues 1–19 (MRVLFIIAVLALISVGCYA). A propeptide spanning residues 20–44 (SEMKDRSSRNEVLSAIFAIEEPQER) is cleaved from the precursor. Disulfide bonds link Cys46–Cys61, Cys53–Cys66, and Cys60–Cys73. The residue at position 78 (Trp78) is a Tryptophan amide.

It belongs to the neurotoxin 10 (Hwtx-1) family. 35 (Jztx-27) subfamily. As to expression, expressed by the venom gland.

The protein resides in the secreted. Probable ion channel inhibitor. The chain is U24-theraphotoxin-Cg1a from Chilobrachys guangxiensis (Chinese earth tiger tarantula).